The chain runs to 404 residues: Argininosuccinate synthase (404 aa).

ATP is bound by residues 10 to 18 (AYSGGVDTS) and Ala-38. Tyr-89 serves as a coordination point for L-citrulline. ATP is bound at residue Gly-119. L-aspartate-binding residues include Thr-121, Asn-125, and Asp-126. Asn-125 is an L-citrulline binding site. L-citrulline is bound by residues Arg-129, Ser-177, Ser-186, Glu-262, and Tyr-274.

This sequence belongs to the argininosuccinate synthase family. Type 1 subfamily. In terms of assembly, homotetramer.

The protein resides in the cytoplasm. It carries out the reaction L-citrulline + L-aspartate + ATP = 2-(N(omega)-L-arginino)succinate + AMP + diphosphate + H(+). The protein operates within amino-acid biosynthesis; L-arginine biosynthesis; L-arginine from L-ornithine and carbamoyl phosphate: step 2/3. The polypeptide is Argininosuccinate synthase (Prochlorococcus marinus (strain MIT 9312)).